Reading from the N-terminus, the 62-residue chain is Large ribosomal subunit protein bL28 (62 aa).

The segment at 1–27 (MAKECVITGRKSRSGNKRSHAMNSSKR) is disordered. The span at 10–20 (RKSRSGNKRSH) shows a compositional bias: basic residues.

This sequence belongs to the bacterial ribosomal protein bL28 family.

This is Large ribosomal subunit protein bL28 from Listeria innocua serovar 6a (strain ATCC BAA-680 / CLIP 11262).